We begin with the raw amino-acid sequence, 1188 residues long: MSTHSGDSTKQQHYRSSDPYSGRRPIPTIPKFFRDRKQRAEKKEEQQREQTENEKLFDPITQRDVEINDVHFDYAKTYDDPSFTVPNQSIQGSSLPSEKPYLSSNQPTNVYKQHQDDLAPPEADNQITRDVPISDEKTNILFFPSPSIDLSYVSKEVKQKTGQYSLFAYIFSLVISWFFTHSIIISAVLPLAISSCMYLWMQNIYAVAKDAEWGAEQKRGEYARLNLIPESAEWMNHLLEKVWPLINPEMFSSVADQIEDVMQASIPSFVENVRVASLDQGSHPVRVVSIRSLPSGEASESFSEKQASEAEHKDEPEQQRKQFYNFELCLAYHAKPVEDATSTSARASNLHLRIVFYPGIKGTVGFPLPIWVEIKGFVARIRFRCELMPEVPFLKNVTFSLMGLPELNVSAVPVAEGGVNIFGLPLISKFVNDAISAAANEYVSPKSMTIDLSKTLLGDDIKKEVNALGVIFVHINRAEDLSKQDVNGLSDAYITVGFHKFGKPLYCTRVVKQDLNPIWNEYAFIPVFPDQVKAGEKISIELWDSDRFSPDDVVGRTKIGLHLLIQDSGKMHERCDTLTGISEDTSLPGRVFYEIGYFPRAEFKPSLKTSGHDITIPRSMRDDPAFQNPHGSLDNKEEEAAVTTAPDEEYPSGILSFTVHQAVNLQMNHPTGTFGNVSGNYNTSPAQSVGDVTAEEGSELPSSYVCVDLDDTLVYKTRTKVFTSNPIYNAGSEKFVKDWRNAMLCFTVRDFKLREHDSILGVVNIPLATTLTTSSQLTKWYPIQGGIGFGSVRISILFRSMKLKIPRNLLGWDIGTLEFMDRQIVAEGTGSVSDVSFSSIRVNIAGVKITAKSSTSNSSSTAEYHVRSRHAVIPVNNRYRSAVVFEFRKQLQRKHNVFAMVWLVDLEDNVEQNIRVPIFTSSKPAHVLQNMIDFDHPDKESEFKIIGYLSTRICFHRGLDDSHEQLVDNDDEAAIFETYRCLKSMGLRRGYVKDMKNPLADQRASLDESRETTTASSKFESDDSVDTEDEETTTDRTPIECTQTVSMVDPNVNGDIQGRNSLGTMNSNERNLEQEFISLGYASKNRPKAHAQEGTNQPGASENVEPVLADDSDAVTIHSNISSDDQKRKLVNADDRELEKRLHRGPYNSKIVRTGEWVKDGAKMGWRNLRRKFALNGRQPDVETEISK.

Over residues 1–11 (MSTHSGDSTKQ) the composition is skewed to polar residues. Disordered stretches follow at residues 1–61 (MSTH…DPIT) and 83–125 (FTVP…EADN). The span at 41 to 61 (EKKEEQQREQTENEKLFDPIT) shows a compositional bias: basic and acidic residues. The segment covering 84 to 112 (TVPNQSIQGSSLPSEKPYLSSNQPTNVYK) has biased composition (polar residues). Residues 173–193 (LVISWFFTHSIIISAVLPLAI) traverse the membrane as a helical segment. The region spanning 228-453 (IPESAEWMNH…SPKSMTIDLS (226 aa)) is the SMP-LTD domain. The disordered stretch occupies residues 298–318 (ASESFSEKQASEAEHKDEPEQ). The span at 302–318 (FSEKQASEAEHKDEPEQ) shows a compositional bias: basic and acidic residues. 2 consecutive C2 domains span residues 451–576 (DLSK…ERCD) and 636–781 (KEEE…TKWY). Ca(2+) contacts are provided by Asp485, Asp491, Asp544, Asp546, Ser549, and Asp552. 2 disordered regions span residues 615-639 (TIPR…KEEE) and 1002-1066 (QRAS…GTMN). Residue Ser1005 is modified to Phosphoserine. Residues 1022–1032 (DDSVDTEDEET) show a composition bias toward acidic residues.

Requires Ca(2+) as cofactor.

Its subcellular location is the cytoplasm. It localises to the endoplasmic reticulum membrane. It is found in the nucleus membrane. The protein localises to the cytoskeleton. The protein resides in the microtubule organizing center. Its subcellular location is the spindle pole body. Functionally, has a role in meiosis. The polypeptide is Meiotically up-regulated gene 190 protein (mug190) (Schizosaccharomyces pombe (strain 972 / ATCC 24843) (Fission yeast)).